Here is a 336-residue protein sequence, read N- to C-terminus: Dihydroorotate dehydrogenase (quinone) (336 aa).

FMN-binding positions include 62–66 (AGLDK) and Thr-86. Residue Lys-66 participates in substrate binding. Substrate is bound at residue 111 to 115 (NRMGF). Residues Asn-139 and Asn-172 each coordinate FMN. A substrate-binding site is contributed by Asn-172. The active-site Nucleophile is Ser-175. Residue Asn-177 coordinates substrate. 2 residues coordinate FMN: Lys-217 and Thr-245. 246–247 (NT) lines the substrate pocket. FMN contacts are provided by residues Gly-268, Gly-297, and 318–319 (YS).

It belongs to the dihydroorotate dehydrogenase family. Type 2 subfamily. As to quaternary structure, monomer. Requires FMN as cofactor.

It localises to the cell membrane. The catalysed reaction is (S)-dihydroorotate + a quinone = orotate + a quinol. It functions in the pathway pyrimidine metabolism; UMP biosynthesis via de novo pathway; orotate from (S)-dihydroorotate (quinone route): step 1/1. In terms of biological role, catalyzes the conversion of dihydroorotate to orotate with quinone as electron acceptor. The chain is Dihydroorotate dehydrogenase (quinone) from Yersinia enterocolitica serotype O:8 / biotype 1B (strain NCTC 13174 / 8081).